Here is a 938-residue protein sequence, read N- to C-terminus: MSDYKSTLNLPETGFPMRGDLAKREPGMLQRWYDDKLYSIIREAKKGKKTFILHDGPPYANGSIHIGHSVNKILKDIIVKSKGMAGYDSPYVPGWDCHGLPIEHKVEQTIGKPGEKVSAAEFRAACRQYAAEQVEGQKADFIRLGVLGDWDRPYLTMDFKTEANIIRALGKIIGNGHLHKGAKPVHWCLDCRSALAEAEVEYYDKTSPSIDVMFDAVDKDAVQAKFGAAHVNGPISLVIWTTTPWTMPANRAISLHPEFDYQLVQVEGRALILAKDMVDSVMKRVGVTQWTVLGDVQGAALELMGFQHPFLAHVSPVVLGEHVTLEAGTGAVHTAPGHGPDDYVIGQKYGIETANPVGPDGSFLPGTYPTLDGLNVFKANDTIVELLREKGALLHLEKLHHSYPHCWRHKTPIIFRATPQWFISMDQKGLRAQSLKEIKGVQWIPDWGQARIESMVANRPDWCISRQRTWGVPMALFVHKDTEQLHPDSLELMEKVALRVEQDGIQAWWDLDARELMGADADNYVKVPDTLDVWFDSGSTSYSVVDARPEFGGSAPDLYLEGSDQHRGWFMSSLMISTAMKGKAPYRQVLTHGFTVDGQGRKMSKSLGNTVSPQDVMNKLGADILRLWVASTDYSGEIAVSDEILKRSADSYRRIRNTARFLLANLAGFNPETDKVKPEEMVVVDRWAVGRALAAQNDIVASYEAYDFHEVVQRLMQFCSVEMGSFYLDIIKDRQYTAKADGLARRSCQTALWYIVEALVRWMAPIMSFTADEIWGYLPGKRAQYVFTEEWFDGLFSLEDNQPMNDAYWAELLKVRGEVNKVIEQARADKRVGGSLEASVTLYADAQLAEKLTSLGEELRFVLLTSGAEVADYAGAPDDAQQSETVKGLKIALRKAEGEKCPRCWHYTSDIGQNAEHADMCGRCVTNVAGSGEERKFA.

The short motif at Pro58 to His68 is the 'HIGH' region element. Glu561 provides a ligand contact to L-isoleucyl-5'-AMP. Residues Lys602–Ser606 carry the 'KMSKS' region motif. Lys605 contacts ATP. Zn(2+) is bound by residues Cys901, Cys904, Cys921, and Cys924.

This sequence belongs to the class-I aminoacyl-tRNA synthetase family. IleS type 1 subfamily. In terms of assembly, monomer. Zn(2+) is required as a cofactor.

Its subcellular location is the cytoplasm. It carries out the reaction tRNA(Ile) + L-isoleucine + ATP = L-isoleucyl-tRNA(Ile) + AMP + diphosphate. In terms of biological role, catalyzes the attachment of isoleucine to tRNA(Ile). As IleRS can inadvertently accommodate and process structurally similar amino acids such as valine, to avoid such errors it has two additional distinct tRNA(Ile)-dependent editing activities. One activity is designated as 'pretransfer' editing and involves the hydrolysis of activated Val-AMP. The other activity is designated 'posttransfer' editing and involves deacylation of mischarged Val-tRNA(Ile). In Erwinia tasmaniensis (strain DSM 17950 / CFBP 7177 / CIP 109463 / NCPPB 4357 / Et1/99), this protein is Isoleucine--tRNA ligase.